The following is an 85-amino-acid chain: Small ribosomal subunit protein uS17 (85 aa).

The protein belongs to the universal ribosomal protein uS17 family. Part of the 30S ribosomal subunit.

Its function is as follows. One of the primary rRNA binding proteins, it binds specifically to the 5'-end of 16S ribosomal RNA. The polypeptide is Small ribosomal subunit protein uS17 (Spiroplasma citri).